Consider the following 784-residue polypeptide: LPS-assembly protein LptD (784 aa).

Positions 1–24 (MKKRIPTLLATMIATALYSQQGLA) are cleaved as a signal peptide. Cystine bridges form between Cys-31–Cys-724 and Cys-173–Cys-725.

It belongs to the LptD family. In terms of assembly, component of the lipopolysaccharide transport and assembly complex. Interacts with LptE and LptA. Contains two intramolecular disulfide bonds.

Its subcellular location is the cell outer membrane. Its function is as follows. Together with LptE, is involved in the assembly of lipopolysaccharide (LPS) at the surface of the outer membrane. In Escherichia coli O6:K15:H31 (strain 536 / UPEC), this protein is LPS-assembly protein LptD.